Here is a 632-residue protein sequence, read N- to C-terminus: MAU2 chromatid cohesion factor homolog (632 aa).

TPR repeat units follow at residues glycine 453–glutamate 486 and serine 493–isoleucine 526.

This sequence belongs to the SCC4/mau-2 family. As to quaternary structure, interacts with Nipped-B to form the cohesin loading complex.

The protein resides in the nucleus. The protein localises to the nucleoplasm. In terms of biological role, required for association of the cohesin complex with chromatin during interphase. Plays a role in sister chromatid cohesion and normal progression through prometaphase. The polypeptide is MAU2 chromatid cohesion factor homolog (Drosophila erecta (Fruit fly)).